A 273-amino-acid chain; its full sequence is 5-deoxy-glucuronate isomerase (273 aa).

The protein belongs to the isomerase IolB family.

It catalyses the reaction 5-deoxy-D-glucuronate = 5-dehydro-2-deoxy-D-gluconate. The protein operates within polyol metabolism; myo-inositol degradation into acetyl-CoA; acetyl-CoA from myo-inositol: step 4/7. Functionally, involved in the isomerization of 5-deoxy-glucuronate (5DG) to 5-dehydro-2-deoxy-D-gluconate (DKG or 2-deoxy-5-keto-D-gluconate). The polypeptide is 5-deoxy-glucuronate isomerase (Listeria monocytogenes serotype 4b (strain CLIP80459)).